The sequence spans 167 residues: Translationally-controlled tumor protein homolog (167 aa).

The region spanning 1 to 167 is the TCTP domain; sequence MIIFKDVISN…WKHGIKEEKI (167 aa).

It belongs to the TCTP family.

Its subcellular location is the cytoplasm. The protein localises to the cytoskeleton. Its function is as follows. Involved in protein synthesis. Involved in microtubule stabilization. This is Translationally-controlled tumor protein homolog from Yarrowia lipolytica (strain CLIB 122 / E 150) (Yeast).